The primary structure comprises 477 residues: Bifunctional protein HldE (477 aa).

A ribokinase region spans residues 1–318 (MKVNLPAFER…ENAVRGRADT (318 aa)). 195–198 (NLSE) contacts ATP. Aspartate 264 is an active-site residue. The cytidylyltransferase stretch occupies residues 344 to 477 (MTNGVFDILH…IKKIQTESEK (134 aa)).

This sequence in the N-terminal section; belongs to the carbohydrate kinase PfkB family. In the C-terminal section; belongs to the cytidylyltransferase family. Homodimer.

It catalyses the reaction D-glycero-beta-D-manno-heptose 7-phosphate + ATP = D-glycero-beta-D-manno-heptose 1,7-bisphosphate + ADP + H(+). The catalysed reaction is D-glycero-beta-D-manno-heptose 1-phosphate + ATP + H(+) = ADP-D-glycero-beta-D-manno-heptose + diphosphate. The protein operates within nucleotide-sugar biosynthesis; ADP-L-glycero-beta-D-manno-heptose biosynthesis; ADP-L-glycero-beta-D-manno-heptose from D-glycero-beta-D-manno-heptose 7-phosphate: step 1/4. Its pathway is nucleotide-sugar biosynthesis; ADP-L-glycero-beta-D-manno-heptose biosynthesis; ADP-L-glycero-beta-D-manno-heptose from D-glycero-beta-D-manno-heptose 7-phosphate: step 3/4. Functionally, catalyzes the phosphorylation of D-glycero-D-manno-heptose 7-phosphate at the C-1 position to selectively form D-glycero-beta-D-manno-heptose-1,7-bisphosphate. Its function is as follows. Catalyzes the ADP transfer from ATP to D-glycero-beta-D-manno-heptose 1-phosphate, yielding ADP-D-glycero-beta-D-manno-heptose. The chain is Bifunctional protein HldE from Salmonella dublin (strain CT_02021853).